Here is a 481-residue protein sequence, read N- to C-terminus: ATP synthase subunit beta, chloroplastic (481 aa).

An ATP-binding site is contributed by 162-169; the sequence is GGAGVGKT.

It belongs to the ATPase alpha/beta chains family. F-type ATPases have 2 components, CF(1) - the catalytic core - and CF(0) - the membrane proton channel. CF(1) has five subunits: alpha(3), beta(3), gamma(1), delta(1), epsilon(1). CF(0) has four main subunits: a(1), b(1), b'(1) and c(9-12).

The protein localises to the plastid. The protein resides in the chloroplast thylakoid membrane. The enzyme catalyses ATP + H2O + 4 H(+)(in) = ADP + phosphate + 5 H(+)(out). Functionally, produces ATP from ADP in the presence of a proton gradient across the membrane. The catalytic sites are hosted primarily by the beta subunits. This chain is ATP synthase subunit beta, chloroplastic, found in Oltmannsiellopsis viridis (Marine flagellate).